We begin with the raw amino-acid sequence, 79 residues long: Major outer membrane lipoprotein Lpp 3 (79 aa).

A signal peptide spans 1–21; it reads MNRTNKLILGAVVLGSALLAG. Cys-22 carries N-palmitoyl cysteine lipidation. A lipid anchor (S-diacylglycerol cysteine) is attached at Cys-22. Repeats lie at residues 25-35 and 39-49; these read NAKIDQLSSDV and SAKVDQLSNDV. Positions 28 to 76 form a coiled coil; sequence IDQLSSDVQTLSAKVDQLSNDVNAMRSDVQAAKDDAARANQRLDNKVLR. Lys-79 carries the N6-murein peptidoglycan lysine modification.

The protein belongs to the Lpp family. Homotrimer.

Its subcellular location is the cell outer membrane. The protein resides in the secreted. The protein localises to the cell wall. Functionally, a highly abundant outer membrane lipoprotein that controls the distance between the inner and outer membranes. The only protein known to be covalently linked to the peptidoglycan network (PGN). Also non-covalently binds the PGN. The link between the cell outer membrane and PGN contributes to maintenance of the structural and functional integrity of the cell envelope, and maintains the correct distance between the PGN and the outer membrane. The protein is Major outer membrane lipoprotein Lpp 3 of Salmonella paratyphi A (strain ATCC 9150 / SARB42).